A 216-amino-acid polypeptide reads, in one-letter code: Hydrogenase-4 component E (216 aa).

At 1–3 the chain is on the periplasmic side; sequence MTG. A helical transmembrane segment spans residues 4–24; it reads SMIVNNLAGLMMLTSLFVISV. Residues 25–38 lie on the Cytoplasmic side of the membrane; that stretch reads KSYRLSCGFYACQS. Helical transmembrane passes span 39 to 59 and 60 to 80; these read LVLV…QLLI and WSAS…TYAA. Residues 81-92 lie on the Cytoplasmic side of the membrane; it reads RNIPQNIPEKAL. The helical transmembrane segment at 93-113 threads the bilayer; the sequence is FGPAMMALLAALIVLLCAFVV. Residues 114–122 are Periplasmic-facing; it reads QPVKLPMAT. Residues 123–143 traverse the membrane as a helical segment; sequence GLKPALAVALGHFLLGLLCIV. The Cytoplasmic portion of the chain corresponds to 144-150; that stretch reads SQRNILR. Residues 151-171 traverse the membrane as a helical segment; sequence QIFGYCLMENGSHLVLALLAW. Residues 172–175 lie on the Periplasmic side of the membrane; that stretch reads RAPE. Residues 176-196 form a helical membrane-spanning segment; that stretch reads LVEIGIATDAIFAVIVMVLLA. Topologically, residues 197 to 216 are cytoplasmic; the sequence is RKIWRTHGTLDVNNLTALKG.

Its subcellular location is the cell inner membrane. This Escherichia coli O157:H7 protein is Hydrogenase-4 component E (hyfE).